Here is a 448-residue protein sequence, read N- to C-terminus: Trk system potassium uptake protein TrkA homolog 2 (448 aa).

One can recognise an RCK N-terminal 1 domain in the interval 1–124 (MKAVVIGAGE…RAQVGVDIMI (124 aa)). Residues 7–11 (GAGEV), glutamate 29, 70–71 (TG), and arginine 101 each bind NAD(+). The RCK C-terminal 1 domain maps to 144 to 225 (IDAEMFAGGK…MADLENVFGN (82 aa)). One can recognise an RCK N-terminal 2 domain in the interval 230–348 (RNRILLIGCG…FEMVGIDIAV (119 aa)). An NAD(+)-binding site is contributed by 232-262 (RILLIGCGIVGFYLAKIIDKDENADLKVIEY). Residues 368-448 (EALATIEGEK…AVRSVEKLFK (81 aa)) enclose the RCK C-terminal 2 domain.

Part of a potassium transport system. The chain is Trk system potassium uptake protein TrkA homolog 2 (trkA2) from Methanosarcina mazei (strain ATCC BAA-159 / DSM 3647 / Goe1 / Go1 / JCM 11833 / OCM 88) (Methanosarcina frisia).